A 351-amino-acid polypeptide reads, in one-letter code: Glycerol-3-phosphate dehydrogenase [NAD(P)+] (351 aa).

Residues serine 12, tryptophan 13, histidine 33, and lysine 114 each coordinate NADPH. 3 residues coordinate sn-glycerol 3-phosphate: lysine 114, glycine 145, and serine 147. Position 149 (alanine 149) interacts with NADPH. Lysine 200, aspartate 253, serine 263, arginine 264, and asparagine 265 together coordinate sn-glycerol 3-phosphate. Lysine 200 (proton acceptor) is an active-site residue. Position 264 (arginine 264) interacts with NADPH. Positions 288 and 290 each coordinate NADPH.

It belongs to the NAD-dependent glycerol-3-phosphate dehydrogenase family.

It localises to the cytoplasm. The enzyme catalyses sn-glycerol 3-phosphate + NAD(+) = dihydroxyacetone phosphate + NADH + H(+). It carries out the reaction sn-glycerol 3-phosphate + NADP(+) = dihydroxyacetone phosphate + NADPH + H(+). Its pathway is membrane lipid metabolism; glycerophospholipid metabolism. Functionally, catalyzes the reduction of the glycolytic intermediate dihydroxyacetone phosphate (DHAP) to sn-glycerol 3-phosphate (G3P), the key precursor for phospholipid synthesis. The sequence is that of Glycerol-3-phosphate dehydrogenase [NAD(P)+] from Lacticaseibacillus casei (strain BL23) (Lactobacillus casei).